A 374-amino-acid polypeptide reads, in one-letter code: Tryptophan--tRNA ligase (374 aa).

The 'HIGH' region motif lies at 81-89; that stretch reads PSGPVHIGH. A 'KMSKS' region motif is present at residues 258–262; it reads KMSAS.

It belongs to the class-I aminoacyl-tRNA synthetase family.

The protein resides in the cytoplasm. The catalysed reaction is tRNA(Trp) + L-tryptophan + ATP = L-tryptophyl-tRNA(Trp) + AMP + diphosphate + H(+). The sequence is that of Tryptophan--tRNA ligase from Pyrobaculum calidifontis (strain DSM 21063 / JCM 11548 / VA1).